The following is a 675-amino-acid chain: Potassium-transporting ATPase ATP-binding subunit (675 aa).

4 consecutive transmembrane segments (helical) span residues 34–54 (IMFV…FPDI), 65–85 (LITI…SEAF), 216–236 (IALF…IVTL), and 245–265 (LILP…TTIG). Asp304 (4-aspartylphosphate intermediate) is an active-site residue. ATP contacts are provided by residues Asp341, Glu345, 372 to 379 (FTAETRMS), and Lys390. Asp513 and Asp517 together coordinate Mg(2+). 3 consecutive transmembrane segments (helical) span residues 569 to 591 (ALTT…ALMM), 611 to 631 (AIIS…PIAM), and 644 to 664 (IFIN…FLGI).

Belongs to the cation transport ATPase (P-type) (TC 3.A.3) family. Type IA subfamily. As to quaternary structure, the system is composed of three essential subunits: KdpA, KdpB and KdpC.

The protein localises to the cell membrane. It carries out the reaction K(+)(out) + ATP + H2O = K(+)(in) + ADP + phosphate + H(+). Part of the high-affinity ATP-driven potassium transport (or Kdp) system, which catalyzes the hydrolysis of ATP coupled with the electrogenic transport of potassium into the cytoplasm. This subunit is responsible for energy coupling to the transport system and for the release of the potassium ions to the cytoplasm. This Staphylococcus aureus (strain bovine RF122 / ET3-1) protein is Potassium-transporting ATPase ATP-binding subunit.